The following is a 73-amino-acid chain: Sec-independent protein translocase protein TatA (73 aa).

Residues 1–21 (MGLSWQQLLILLLVVVVIFGT) form a helical membrane-spanning segment.

It belongs to the TatA/E family. The Tat system comprises two distinct complexes: a TatABC complex, containing multiple copies of TatA, TatB and TatC subunits, and a separate TatA complex, containing only TatA subunits. Substrates initially bind to the TatABC complex, which probably triggers association of the separate TatA complex to form the active translocon.

The protein resides in the cell inner membrane. In terms of biological role, part of the twin-arginine translocation (Tat) system that transports large folded proteins containing a characteristic twin-arginine motif in their signal peptide across membranes. TatA could form the protein-conducting channel of the Tat system. The chain is Sec-independent protein translocase protein TatA from Histophilus somni (strain 129Pt) (Haemophilus somnus).